We begin with the raw amino-acid sequence, 269 residues long: Cytochrome c oxidase subunit 3 (269 aa).

The next 7 membrane-spanning stretches (helical) occupy residues 13 to 33 (PFHL…LLVL), 46 to 66 (NGHY…SFWF), 90 to 110 (GVIL…WAFF), 138 to 160 (PLLN…HSII), 167 to 187 (ALYG…FQGV), 207 to 227 (FGTG…LVAL), and 245 to 265 (AGIL…ISIY).

Belongs to the cytochrome c oxidase subunit 3 family. Component of the cytochrome c oxidase (complex IV, CIV), a multisubunit enzyme composed of a catalytic core of 3 subunits and several supernumerary subunits. The complex exists as a monomer or a dimer and forms supercomplexes (SCs) in the inner mitochondrial membrane with ubiquinol-cytochrome c oxidoreductase (cytochrome b-c1 complex, complex III, CIII).

It localises to the mitochondrion inner membrane. It catalyses the reaction 4 Fe(II)-[cytochrome c] + O2 + 8 H(+)(in) = 4 Fe(III)-[cytochrome c] + 2 H2O + 4 H(+)(out). Its function is as follows. Component of the cytochrome c oxidase, the last enzyme in the mitochondrial electron transport chain which drives oxidative phosphorylation. The respiratory chain contains 3 multisubunit complexes succinate dehydrogenase (complex II, CII), ubiquinol-cytochrome c oxidoreductase (cytochrome b-c1 complex, complex III, CIII) and cytochrome c oxidase (complex IV, CIV), that cooperate to transfer electrons derived from NADH and succinate to molecular oxygen, creating an electrochemical gradient over the inner membrane that drives transmembrane transport and the ATP synthase. Cytochrome c oxidase is the component of the respiratory chain that catalyzes the reduction of oxygen to water. Electrons originating from reduced cytochrome c in the intermembrane space (IMS) are transferred via the dinuclear copper A center (CU(A)) of subunit 2 and heme A of subunit 1 to the active site in subunit 1, a binuclear center (BNC) formed by heme A3 and copper B (CU(B)). The BNC reduces molecular oxygen to 2 water molecules using 4 electrons from cytochrome c in the IMS and 4 protons from the mitochondrial matrix. This is Cytochrome c oxidase subunit 3 (COX3) from Pyricularia grisea (Crabgrass-specific blast fungus).